The sequence spans 695 residues: MKRGKDEEKILEPMFPRLHVNDADKGGPRAPPRNKMALYEQLSIPSQRFGDHGTMNSRSNNTSTLVHPGPSSQPCGVERNLSVQHLDSSAANQATEKFVSQMSFMENVRSSAQHDQRKMVREEEDFAVPVYINSRRSQSHGRTKSGIEKEKHTPMVAPSSHHSIRFQEVNQTGSKQNVCLATCSKPEVRDQVKANARSGGFVISLDVSVTEEIDLEKSASSHDRVNDYNASLRQESRNRLYRDGGKTRLKDTDNGAESHLATENHSQEGHGSPEDIDNDREYSKSRACASLQQINEEASDDVSDDSMVDSISSIDVSPDDVVGILGQKRFWRARKAIANQQRVFAVQLFELHRLIKVQKLIAASPDLLLDEISFLGKVSAKSYPVKKLLPSEFLVKPPLPHVVVKQRGDSEKTDQHKMESSAENVVGRLSNQGHHQQSNYMPFANNPPASPAPNGYCFPPQPPPSGNHQQWLIPVMSPSEGLIYKPHPGMAHTGHYGGYYGHYMPTPMVMPQYHPGMGFPPPGNGYFPPYGMMPTIMNPYCSSQQQQQQQPNEQMNQFGHPGNLQNTQQQQQRSDNEPAPQQQQQPTKSYPRARKSRQGSTGSSPSGPQGISGSKSFRPFAAVDEDSNINNAPEQTMTTTTTTTRTTVTQTTRDGGGVTRVIKVVPHNAKLASENAARIFQSIQEERKRYDSSKP.

A compositionally biased stretch (basic and acidic residues) spans 1 to 11 (MKRGKDEEKIL). Disordered regions lie at residues 1-33 (MKRGKDEEKILEPMFPRLHVNDADKGGPRAPPR), 48-75 (RFGDHGTMNSRSNNTSTLVHPGPSSQPC), 136-159 (RSQSHGRTKSGIEKEKHTPMVAPS), 216-283 (EKSA…REYS), and 541-653 (CSSQ…QTTR). Residues 54 to 74 (TMNSRSNNTSTLVHPGPSSQP) are compositionally biased toward polar residues. Basic and acidic residues-rich tracts occupy residues 216-226 (EKSASSHDRVN), 234-253 (QESRNRLYRDGGKTRLKDTD), and 260-283 (LATENHSQEGHGSPEDIDNDREYS). Positions 261–484 (ATENHSQEGH…VMSPSEGLIY (224 aa)) are interaction with ELF3. Composition is skewed to polar residues over residues 551–567 (PNEQMNQFGHPGNLQNT) and 579–588 (APQQQQQPTK). 2 stretches are compositionally biased toward low complexity: residues 598-616 (QGSTGSSPSGPQGISGSKS) and 636-653 (TMTTTTTTTRTTVTQTTR).

Interacts specifically with both Pr and Pfr forms of phytochrome B. Interacts with ELF4. May form a homodimer.

It localises to the nucleus. Its function is as follows. May be a transcription factor part of a circadian clock input pathway. Acts within a 'zeitnehmer' feedback loop and is involved in its own circadian regulation. Has no role in regulating circadian clock function in the dark. Part of a corepressor complex consisting of ELF4, ELF3, and LUX involved in the transcriptional regulation of APRR9. The activity of the protein may be decreased in long day conditions due to its interaction with phytochrome B (phyB). Can regulate the initiation of flowering independently of phyB. Also involved in responses to nematode parasitism, like the formation of the nematode feeding structure. The sequence is that of Protein EARLY FLOWERING 3 (ELF3) from Arabidopsis thaliana (Mouse-ear cress).